The sequence spans 888 residues: Leucine--tRNA ligase (888 aa).

The 'HIGH' region signature appears at 42–52; sequence PYPSGKLHMGH. Residues 640 to 644 carry the 'KMSKS' region motif; it reads TMSKS. Lys-643 is an ATP binding site.

Belongs to the class-I aminoacyl-tRNA synthetase family.

The protein localises to the cytoplasm. The catalysed reaction is tRNA(Leu) + L-leucine + ATP = L-leucyl-tRNA(Leu) + AMP + diphosphate. The protein is Leucine--tRNA ligase of Polaromonas naphthalenivorans (strain CJ2).